The following is a 1508-amino-acid chain: DNA-directed RNA polymerase subunit beta' (1508 aa).

Residues Cys71, Cys73, Cys86, and Cys89 each contribute to the Zn(2+) site. Mg(2+) contacts are provided by Asp470, Asp472, and Asp474. Zn(2+)-binding residues include Cys804, Cys878, Cys885, and Cys888.

It belongs to the RNA polymerase beta' chain family. In terms of assembly, the RNAP catalytic core consists of 2 alpha, 1 beta, 1 beta' and 1 omega subunit. When a sigma factor is associated with the core the holoenzyme is formed, which can initiate transcription. The cofactor is Mg(2+). Zn(2+) serves as cofactor.

The catalysed reaction is RNA(n) + a ribonucleoside 5'-triphosphate = RNA(n+1) + diphosphate. Functionally, DNA-dependent RNA polymerase catalyzes the transcription of DNA into RNA using the four ribonucleoside triphosphates as substrates. The chain is DNA-directed RNA polymerase subunit beta' from Campylobacter fetus subsp. fetus (strain 82-40).